A 165-amino-acid polypeptide reads, in one-letter code: Chorismate pyruvate-lyase (165 aa).

Residues Met-35, Arg-77, Leu-115, and Glu-156 each coordinate substrate.

This sequence belongs to the UbiC family. Monomer.

It localises to the cytoplasm. The enzyme catalyses chorismate = 4-hydroxybenzoate + pyruvate. The protein operates within cofactor biosynthesis; ubiquinone biosynthesis. Removes the pyruvyl group from chorismate, with concomitant aromatization of the ring, to provide 4-hydroxybenzoate (4HB) for the ubiquinone pathway. This is Chorismate pyruvate-lyase from Shigella boydii serotype 18 (strain CDC 3083-94 / BS512).